The following is a 445-amino-acid chain: Enolase 2 (445 aa).

Histidine 164 and glutamate 173 together coordinate substrate. The active-site Proton donor is glutamate 216. Residues aspartate 251, glutamate 301, and aspartate 328 each coordinate Mg(2+). Residues glutamate 301 and aspartate 328 each contribute to the substrate site. Lysine 353 functions as the Proton acceptor in the catalytic mechanism. Substrate contacts are provided by residues 380–383 (SHRS) and lysine 404.

This sequence belongs to the enolase family. In terms of assembly, homodimer. It depends on Mg(2+) as a cofactor.

Its subcellular location is the cytoplasm. It catalyses the reaction (2R)-2-phosphoglycerate = phosphoenolpyruvate + H2O. The protein operates within carbohydrate degradation; glycolysis; pyruvate from D-glyceraldehyde 3-phosphate: step 4/5. The chain is Enolase 2 (ENO2) from Hevea brasiliensis (Para rubber tree).